Reading from the N-terminus, the 111-residue chain is WAP four-disulfide core domain protein 12 (111 aa).

The signal sequence occupies residues 1-23 (MGSSSFLVLMVSLTLVTLVAAEG). The WAP domain occupies 27–74 (GIEKAGVCPADNVRCFKSDPPQCHTDQDCLGERKCCYLHCGFKCVIPV). 4 disulfides stabilise this stretch: Cys-34/Cys-62, Cys-41/Cys-66, Cys-49/Cys-61, and Cys-55/Cys-70. The tract at residues 80–111 (GGNKDEDVSGPCPEPGWEAKSPGSSSTGCPQK) is disordered. Residues 101 to 111 (PGSSSTGCPQK) show a composition bias toward polar residues.

It is found in the secreted. Antibacterial protein. Putative acid-stable proteinase inhibitor. In Chlorocebus aethiops (Green monkey), this protein is WAP four-disulfide core domain protein 12 (WFDC12).